The chain runs to 1029 residues: DNA repair protein RAD5A (1029 aa).

Residues 83–104 (SVGANHRVEEENESVNGGGEES) are disordered. The region spanning 406-622 (PSTLQMARGG…YSLLRFLRIE (217 aa)) is the Helicase ATP-binding domain. 419–426 (DAMGLGKT) contributes to the ATP binding site. The short motif at 573-576 (DEAH) is the DEAH box element. The segment at 794-834 (CPICLEALEDAVLTPCAHRLCRECLLASWRNSTSGLCPVCR) adopts an RING-type zinc-finger fold. A Helicase C-terminal domain is found at 864-1029 (KITALLEELE…RIEELKMLFT (166 aa)).

The protein belongs to the SNF2/RAD54 helicase family. RAD16 subfamily.

It is found in the nucleus. In terms of biological role, functions in error-free postreplication DNA repair or DNA-damage tolerance (DTT) pathway. Required for homologous recombination (HR) induced by DNA double-strand break (DSB) in somatic cells. Required for damage-induced DNA repair, independently of MUS81 and RECQL4A. Plays a role in synthesis-dependent strand annealing (SDSA) but not in single-strand annealing (SSA). Possesses double-stranded DNA-dependent ATPase activity. Is able to regress replication forks with preference for forks with a leading strand gap. Is able to catalyze branch migration of Holliday junctions and is unaffected by protein blockades. The polypeptide is DNA repair protein RAD5A (Arabidopsis thaliana (Mouse-ear cress)).